The following is a 338-amino-acid chain: Glycerol-3-phosphate dehydrogenase [NAD(P)+] (338 aa).

Positions 13, 14, and 108 each coordinate NADPH. Positions 108, 139, and 141 each coordinate sn-glycerol 3-phosphate. Residue Ala-143 coordinates NADPH. Residues Lys-194, Asp-247, Ser-257, Arg-258, and Asn-259 each contribute to the sn-glycerol 3-phosphate site. Residue Lys-194 is the Proton acceptor of the active site. Arg-258 provides a ligand contact to NADPH. Residues Val-282 and Glu-284 each contribute to the NADPH site.

It belongs to the NAD-dependent glycerol-3-phosphate dehydrogenase family.

The protein resides in the cytoplasm. It carries out the reaction sn-glycerol 3-phosphate + NAD(+) = dihydroxyacetone phosphate + NADH + H(+). The enzyme catalyses sn-glycerol 3-phosphate + NADP(+) = dihydroxyacetone phosphate + NADPH + H(+). It participates in membrane lipid metabolism; glycerophospholipid metabolism. Its function is as follows. Catalyzes the reduction of the glycolytic intermediate dihydroxyacetone phosphate (DHAP) to sn-glycerol 3-phosphate (G3P), the key precursor for phospholipid synthesis. This chain is Glycerol-3-phosphate dehydrogenase [NAD(P)+], found in Streptococcus pneumoniae (strain P1031).